The sequence spans 346 residues: Low specificity L-threonine aldolase (346 aa).

An N6-(pyridoxal phosphate)lysine modification is found at lysine 207.

This sequence belongs to the threonine aldolase family. In terms of assembly, homotetramer. Requires pyridoxal 5'-phosphate as cofactor.

The enzyme catalyses L-threonine = acetaldehyde + glycine. The catalysed reaction is L-allo-threonine = acetaldehyde + glycine. Functionally, catalyzes the cleavage of L-allo-threonine and L-threonine to glycine and acetaldehyde. The chain is Low specificity L-threonine aldolase (ltaE) from Pseudomonas aeruginosa (strain ATCC 15692 / DSM 22644 / CIP 104116 / JCM 14847 / LMG 12228 / 1C / PRS 101 / PAO1).